The following is an 84-amino-acid chain: Anthracycline acyl carrier protein DpsG (84 aa).

A Carrier domain is found at 3–80 (ELSLAELREI…SMLIFVNERL (78 aa)). Ser-40 bears the O-(pantetheine 4'-phosphoryl)serine mark.

Its pathway is antibiotic biosynthesis; daunorubicin biosynthesis. It participates in antibiotic biosynthesis; carminomycin biosynthesis. It functions in the pathway antibiotic biosynthesis; rhodomycin biosynthesis. The protein operates within antibiotic biosynthesis; aclacinomycin biosynthesis. Involved in the biosynthesis of aklanonate which is an important precursor common to the formation of the clinically significant anthracyclines such as carminomycin, daunorubicin (daunomycin), rhodomycin, aclacinomycin T (aklavin) and aclacinomycin A (aclarubicin). These compounds are aromatic polyketide antibiotics that exhibit high cytotoxicity and are widely applied in the chemotherapy of a variety of cancers. This Streptomyces peucetius protein is Anthracycline acyl carrier protein DpsG (dpsG).